We begin with the raw amino-acid sequence, 686 residues long: Gamma-aminobutyric acid receptor alpha-like (686 aa).

Positions 1-58 (MCTMPATRDASGSGDASTDLIAARSLSSHQGQRSNLRIFKLLISCCLLMLCIYPNAWP) are cleaved as a signal peptide. At 97 to 393 (SSWLTQSNNH…NFHLQRHMGN (297 aa)) the chain is on the extracellular side. N-linked (GlcNAc...) asparagine glycosylation occurs at Asn-108. Cys-233 and Cys-247 are disulfide-bonded. Asn-292 carries N-linked (GlcNAc...) asparagine glycosylation. The next 3 membrane-spanning stretches (helical) occupy residues 394-414 (FLIQ…VSFW), 424-441 (VSLG…GLEA), and 456-476 (FFVF…AVVH). Residues 477 to 650 (YYTKYGSGEC…YNSVSKIDRA (174 aa)) lie on the Cytoplasmic side of the membrane. Positions 570–641 (KPPRADSDED…RRKGKRTPQY (72 aa)) are disordered. The segment covering 586–596 (QLRANEAPTTS) has biased composition (polar residues). Over residues 597–609 (AAAAAAQAAAQAA) the composition is skewed to low complexity. Residues 651-671 (SRIVFPLLFILINVFYWYGYL) traverse the membrane as a helical segment.

Belongs to the ligand-gated ion channel (TC 1.A.9) family. Gamma-aminobutyric acid receptor (TC 1.A.9.5) subfamily. In terms of assembly, generally pentameric. There are five types of GABA(A) receptor chains: alpha, beta, gamma, delta, and rho. Interacts with Lcch3 (beta chain).

It is found in the postsynaptic cell membrane. Its subcellular location is the cell membrane. GABA, an inhibitory neurotransmitter, mediates neuronal inhibition by binding to the GABA receptor and opening an integral chloride channel. May combine with the ligand-gated ion channel subunit Lcch3 to form cation-selective GABA-gated ion channels. The polypeptide is Gamma-aminobutyric acid receptor alpha-like (Grd) (Drosophila melanogaster (Fruit fly)).